A 56-amino-acid chain; its full sequence is Conotoxin reg3.9 (56 aa).

A signal peptide spans 1–8; sequence LLFPLSAL. A disordered region spans residues 1-22; the sequence is LLFPLSALPLDGDQPADQPAER. Positions 9–40 are excised as a propeptide; it reads PLDGDQPADQPAERMQDISPEQNFWFDLVERG. Cystine bridges form between Cys41/Cys55, Cys42/Cys53, and Cys47/Cys56.

Belongs to the conotoxin M superfamily. Expressed by the venom duct.

The protein localises to the secreted. In Conus regius (Crown cone), this protein is Conotoxin reg3.9.